Reading from the N-terminus, the 717-residue chain is Delta-1-pyrroline-5-carboxylate synthase (717 aa).

The segment at 1–296 is glutamate 5-kinase; sequence METVDSTRAF…WASIGETDAR (296 aa). Residues Ser60, Asp157, and Asn176 each coordinate substrate. Residues 196 to 197 and 236 to 242 contribute to the ATP site; these read SD and RGGMTAK. A gamma-glutamyl phosphate reductase region spans residues 297-717; it reads EMAVAARACS…YSHKDLTQQG (421 aa).

The protein in the N-terminal section; belongs to the glutamate 5-kinase family. In the C-terminal section; belongs to the gamma-glutamyl phosphate reductase family. Expressed at high levels in leaves and is inducible in roots subjected to salt stress.

The catalysed reaction is L-glutamate + ATP = L-glutamyl 5-phosphate + ADP. It catalyses the reaction L-glutamate 5-semialdehyde + phosphate + NADP(+) = L-glutamyl 5-phosphate + NADPH + H(+). It participates in amino-acid biosynthesis; L-proline biosynthesis; L-glutamate 5-semialdehyde from L-glutamate: step 1/2. The protein operates within amino-acid biosynthesis; L-proline biosynthesis; L-glutamate 5-semialdehyde from L-glutamate: step 2/2. With respect to regulation, feedback regulated by proline. P5CS plays a key role in proline biosynthesis, leading to osmoregulation in plants. The chain is Delta-1-pyrroline-5-carboxylate synthase (PRO2) from Solanum lycopersicum (Tomato).